The primary structure comprises 426 residues: Inositol hexakisphosphate kinase 2 (426 aa).

Residues E207–L209 and D220 each bind ATP. Residues K222 and K236–K243 contribute to the substrate site. D383 lines the ATP pocket. Residue H386 participates in substrate binding.

This sequence belongs to the inositol phosphokinase (IPK) family.

Its subcellular location is the nucleus. It catalyses the reaction 1D-myo-inositol hexakisphosphate + ATP = 5-diphospho-1D-myo-inositol 1,2,3,4,6-pentakisphosphate + ADP. It functions in the pathway phospholipid metabolism; phosphatidylinositol metabolism. Its activity is regulated as follows. Inhibited by flavonoids, including myricetin, quercetin, luteolin, isorhamnetin, rhamnetin, kaempferol, diosmetin and apigenin. Functionally, converts inositol hexakisphosphate (InsP6) to diphosphoinositol pentakisphosphate (InsP7/PP-InsP5). This is Inositol hexakisphosphate kinase 2 from Homo sapiens (Human).